Here is a 311-residue protein sequence, read N- to C-terminus: Olfactory receptor 287 (311 aa).

At 1-27 (MAWSTGQNLSTPGPFILLGFPGPRSMR) the chain is on the extracellular side. Asn-8 is a glycosylation site (N-linked (GlcNAc...) asparagine). The chain crosses the membrane as a helical span at residues 28 to 53 (IGLFLLFLVMYLLTVVGNLAIISLVG). The Cytoplasmic portion of the chain corresponds to 54–60 (AHRCLQT). Residues 61-82 (PMYFFLCNLSFLEIWFTTACVP) traverse the membrane as a helical segment. Over 83 to 103 (KTLATFAPRGGVISLAGCATQ) the chain is Extracellular. Cys-100 and Cys-192 form a disulfide bridge. A helical membrane pass occupies residues 104–123 (MYFVFSLGCTEYFLLAVMAY). Over 124-142 (DRYLAICLPLRYGGIMTPG) the chain is Cytoplasmic. The chain crosses the membrane as a helical span at residues 143–161 (LAMRLALGSWLCGFSAITV). At 162–199 (PATLIARLSFCGSRVINHFFCDISPWIVLSCTDTQVVE) the chain is on the extracellular side. A helical transmembrane segment spans residues 200-222 (LVSFGIAFCVILGSCGITLVSYA). At 223–239 (YIITTIIKIPSARGRHR) the chain is on the cytoplasmic side. A helical transmembrane segment spans residues 240–263 (AFSTCSSHLTVVLIWYGSTIFLHV). At 264–275 (RTSVESSLDLTK) the chain is on the extracellular side. The helical transmembrane segment at 276–295 (AITVLNTIVTPVLNPFIYTL) threads the bilayer. Residues 296–311 (RNKDVKEALRRTVKGK) are Cytoplasmic-facing.

This sequence belongs to the G-protein coupled receptor 1 family. As to expression, olfactory epithelium.

The protein resides in the cell membrane. Odorant receptor. The polypeptide is Olfactory receptor 287 (Olr287) (Rattus norvegicus (Rat)).